The following is a 154-amino-acid chain: Protein X (154 aa).

A mitochondrial targeting sequence region spans residues 68–117; it reads PCALRFTSARRMETTVNAHQFLPKVLHKRTLGLSVMSTTDLEAYFKDCLF.

It belongs to the orthohepadnavirus protein X family. May form homodimer. May interact with host CEBPA, CFLAR, CREB1, DDB1, E4F1, HBXIP, HSPD1/HSP60, NFKBIA, POLR2E and SMAD4. Interacts with host SMC5-SMC6 complex and induces its degradation. Interacts with host TRPC4AP; leading to prevent ubiquitination of TRPC4AP. Interacts with host PLSCR1; this interaction promotes ubiquitination and degradation of HBx and impairs HBx-mediated cell proliferation. In terms of processing, a fraction may be phosphorylated in insect cells and HepG2 cells, a human hepatoblastoma cell line. Phosphorylated in vitro by host protein kinase C or mitogen-activated protein kinase. N-acetylated in insect cells.

It is found in the host cytoplasm. The protein resides in the host nucleus. It localises to the host mitochondrion. Multifunctional protein that plays a role in silencing host antiviral defenses and promoting viral transcription. Does not seem to be essential for HBV infection. May be directly involved in development of cirrhosis and liver cancer (hepatocellular carcinoma). Most of cytosolic activities involve modulation of cytosolic calcium. The effect on apoptosis is controversial depending on the cell types in which the studies have been conducted. May induce apoptosis by localizing in mitochondria and causing loss of mitochondrial membrane potential. May also modulate apoptosis by binding host CFLAR, a key regulator of the death-inducing signaling complex (DISC). Promotes viral transcription by using the host E3 ubiquitin ligase DDB1 to target the SMC5-SMC6 complex to proteasomal degradation. This host complex would otherwise bind to viral episomal DNA, and prevents its transcription. Moderately stimulates transcription of many different viral and cellular transcription elements. Promoters and enhancers stimulated by HBx contain DNA binding sites for NF-kappa-B, AP-1, AP-2, c-EBP, ATF/CREB, or the calcium-activated factor NF-AT. The polypeptide is Protein X (Hepatitis B virus genotype D (isolate France/alpha1/1989) (HBV-D)).